A 66-amino-acid chain; its full sequence is Jindongenin-1a (66 aa).

Residues 1-22 form the signal peptide; that stretch reads MFTLKKPLLLLFFLGTVSLSLC. The propeptide occupies 23-40; that stretch reads EQERAADDDEGEVIEEEV. Cys-60 and Cys-66 form a disulfide bridge.

Expressed by the skin glands.

It is found in the secreted. Functionally, displays broad-spectrum antibacterial activity against a range of Gram-positive and Gram-negative bacteria. Also displays antifungal activity against C.albicans ATCC 2002. Has low hemolytic activity, low cytotoxicity and low antioxidant activity. This Amolops jingdongensis (Chinese torrent frog) protein is Jindongenin-1a.